A 498-amino-acid polypeptide reads, in one-letter code: Glutamyl-tRNA(Gln) amidotransferase subunit A (498 aa).

Residues K79 and S154 each act as charge relay system in the active site. The active-site Acyl-ester intermediate is the S178.

Belongs to the amidase family. GatA subfamily. As to quaternary structure, heterotrimer of A, B and C subunits.

The enzyme catalyses L-glutamyl-tRNA(Gln) + L-glutamine + ATP + H2O = L-glutaminyl-tRNA(Gln) + L-glutamate + ADP + phosphate + H(+). Its function is as follows. Allows the formation of correctly charged Gln-tRNA(Gln) through the transamidation of misacylated Glu-tRNA(Gln) in organisms which lack glutaminyl-tRNA synthetase. The reaction takes place in the presence of glutamine and ATP through an activated gamma-phospho-Glu-tRNA(Gln). The protein is Glutamyl-tRNA(Gln) amidotransferase subunit A of Psychrobacter cryohalolentis (strain ATCC BAA-1226 / DSM 17306 / VKM B-2378 / K5).